Reading from the N-terminus, the 146-residue chain is MKKQVTIYTDGACSGNPGPGGWGALLMFGSITREVSGSSPATTNNRMELGAAIEALALLKEPCLVDLYSDSSYLVNAINNGWLQRWQRNSWQTAAKKSVENIDLWQKLIKLLKVHEVRFHKVKGHSDNAYNNRCDQLAREAIKKTS.

The RNase H type-1 domain occupies 1–143 (MKKQVTIYTD…CDQLAREAIK (143 aa)). Positions 10, 48, 70, and 135 each coordinate Mg(2+).

This sequence belongs to the RNase H family. In terms of assembly, monomer. Mg(2+) is required as a cofactor.

Its subcellular location is the cytoplasm. The enzyme catalyses Endonucleolytic cleavage to 5'-phosphomonoester.. Endonuclease that specifically degrades the RNA of RNA-DNA hybrids. This is Ribonuclease H from Chlorobium chlorochromatii (strain CaD3).